The following is a 100-amino-acid chain: NADH-quinone oxidoreductase subunit K (100 aa).

Transmembrane regions (helical) follow at residues 4–24, 28–48, and 60–80; these read LQHG…GLLI, LLFM…AFVV, and VMYI…LALL.

This sequence belongs to the complex I subunit 4L family. As to quaternary structure, NDH-1 is composed of 13 different subunits. Subunits NuoA, H, J, K, L, M, N constitute the membrane sector of the complex.

The protein localises to the cell inner membrane. It catalyses the reaction a quinone + NADH + 5 H(+)(in) = a quinol + NAD(+) + 4 H(+)(out). NDH-1 shuttles electrons from NADH, via FMN and iron-sulfur (Fe-S) centers, to quinones in the respiratory chain. The immediate electron acceptor for the enzyme in this species is believed to be ubiquinone. Couples the redox reaction to proton translocation (for every two electrons transferred, four hydrogen ions are translocated across the cytoplasmic membrane), and thus conserves the redox energy in a proton gradient. In Edwardsiella ictaluri (strain 93-146), this protein is NADH-quinone oxidoreductase subunit K.